A 477-amino-acid polypeptide reads, in one-letter code: ATP synthase subunit beta, chloroplastic (477 aa).

Residue 156–163 (GGAGVGKT) coordinates ATP.

Belongs to the ATPase alpha/beta chains family. As to quaternary structure, F-type ATPases have 2 components, CF(1) - the catalytic core - and CF(0) - the membrane proton channel. CF(1) has five subunits: alpha(3), beta(3), gamma(1), delta(1), epsilon(1). CF(0) has four main subunits: a(1), b(1), b'(1) and c(9-12).

The protein resides in the plastid. It is found in the chloroplast thylakoid membrane. The enzyme catalyses ATP + H2O + 4 H(+)(in) = ADP + phosphate + 5 H(+)(out). Its function is as follows. Produces ATP from ADP in the presence of a proton gradient across the membrane. The catalytic sites are hosted primarily by the beta subunits. The polypeptide is ATP synthase subunit beta, chloroplastic (Bigelowiella natans (Pedinomonas minutissima)).